Consider the following 106-residue polypeptide: Putative protein LRRC37A5P (106 aa).

In Homo sapiens (Human), this protein is Putative protein LRRC37A5P (LRRC37A5P).